We begin with the raw amino-acid sequence, 361 residues long: MSDAIRPQPGILDIALYEGGKSHVAGIQNALKLSSNENPFGPSPKAKEAFLRSVHTLHRYPSTDHAGLRHAIAEVHGLDPARVICGVGSDEIITFLCQAYAGPHTDVVFTEHGFLMYRISALAVGANPVEVPERERTTDVDAILAACTPHTRLVFLANPNNPTGTMIGQADLARLAAGLPAQAILVLDGAYAEYVPGYDAGRALIEERGNVVMTRTFSKIYGLGGLRVGWGYGPKAIIDVLNRIRGPFNLSTTQLETAEAAVRDQDHVARCRADNARWRIWLAEALAEIGVPSDTSMANFILARFSDTEEAEACDLHLQTQGLIVRRVAGYKLPHCLRITIGDEASCRRVAHAIGQFKRMR.

Lysine 219 carries the post-translational modification N6-(pyridoxal phosphate)lysine.

This sequence belongs to the class-II pyridoxal-phosphate-dependent aminotransferase family. Histidinol-phosphate aminotransferase subfamily. As to quaternary structure, homodimer. Pyridoxal 5'-phosphate is required as a cofactor.

It catalyses the reaction L-histidinol phosphate + 2-oxoglutarate = 3-(imidazol-4-yl)-2-oxopropyl phosphate + L-glutamate. The protein operates within amino-acid biosynthesis; L-histidine biosynthesis; L-histidine from 5-phospho-alpha-D-ribose 1-diphosphate: step 7/9. The protein is Histidinol-phosphate aminotransferase of Cereibacter sphaeroides (strain ATCC 17029 / ATH 2.4.9) (Rhodobacter sphaeroides).